Here is a 443-residue protein sequence, read N- to C-terminus: Xaa-Pro dipeptidase (443 aa).

Mn(2+) contacts are provided by Asp-246, Asp-257, His-339, Glu-384, and Glu-423.

This sequence belongs to the peptidase M24B family. Bacterial-type prolidase subfamily. Mn(2+) serves as cofactor.

It catalyses the reaction Xaa-L-Pro dipeptide + H2O = an L-alpha-amino acid + L-proline. Splits dipeptides with a prolyl residue in the C-terminal position. This chain is Xaa-Pro dipeptidase, found in Yersinia pseudotuberculosis serotype I (strain IP32953).